We begin with the raw amino-acid sequence, 358 residues long: Fructose-bisphosphate aldolase (358 aa).

Ser-62 is a binding site for D-glyceraldehyde 3-phosphate. Residue Asp-109 is the Proton donor of the active site. Residues His-110, Asp-144, Glu-174, and His-226 each contribute to the Zn(2+) site. Residue Gly-227 participates in dihydroxyacetone phosphate binding. His-264 provides a ligand contact to Zn(2+). Dihydroxyacetone phosphate-binding positions include 265–267 (GGS) and 286–289 (NIDT).

Belongs to the class II fructose-bisphosphate aldolase family. Requires Zn(2+) as cofactor.

The catalysed reaction is beta-D-fructose 1,6-bisphosphate = D-glyceraldehyde 3-phosphate + dihydroxyacetone phosphate. It participates in carbohydrate degradation; glycolysis; D-glyceraldehyde 3-phosphate and glycerone phosphate from D-glucose: step 4/4. Catalyzes the aldol condensation of dihydroxyacetone phosphate (DHAP or glycerone-phosphate) with glyceraldehyde 3-phosphate (G3P) to form fructose 1,6-bisphosphate (FBP) in gluconeogenesis and the reverse reaction in glycolysis. The protein is Fructose-bisphosphate aldolase (fba) of Edwardsiella ictaluri (strain 93-146).